Consider the following 86-residue polypeptide: Muscarinic toxin 38 (86 aa).

A signal peptide spans Met1 to Thr21. 4 disulfides stabilise this stretch: Cys24/Cys45, Cys38/Cys63, Cys67/Cys78, and Cys79/Cys84.

This sequence belongs to the three-finger toxin family. Short-chain subfamily. Aminergic toxin sub-subfamily. As to quaternary structure, monomer. Expressed by the venom gland.

The protein localises to the secreted. Its function is as follows. Binds to the muscarinic acetylcholine receptor (CHRM). This is Muscarinic toxin 38 from Ophiophagus hannah (King cobra).